We begin with the raw amino-acid sequence, 577 residues long: Adenine deaminase (577 aa).

This sequence belongs to the metallo-dependent hydrolases superfamily. Adenine deaminase family. Mn(2+) is required as a cofactor.

The enzyme catalyses adenine + H2O + H(+) = hypoxanthine + NH4(+). The polypeptide is Adenine deaminase (adeC) (Bacillus subtilis (strain 168)).